A 482-amino-acid polypeptide reads, in one-letter code: Anthranilate synthase component 1 (482 aa).

L-tryptophan contacts are provided by residues serine 47 and 267–269 (PYM). Residue 302–303 (GT) coordinates chorismate. Glutamate 329 provides a ligand contact to Mg(2+). Chorismate-binding positions include tyrosine 417, arginine 437, 451–453 (GGG), and glycine 453. Glutamate 466 lines the Mg(2+) pocket.

Belongs to the anthranilate synthase component I family. In terms of assembly, heterotetramer consisting of two non-identical subunits: a beta subunit (TrpG) and a large alpha subunit (TrpE). Requires Mg(2+) as cofactor.

The enzyme catalyses chorismate + L-glutamine = anthranilate + pyruvate + L-glutamate + H(+). Its pathway is amino-acid biosynthesis; L-tryptophan biosynthesis; L-tryptophan from chorismate: step 1/5. With respect to regulation, feedback inhibited by tryptophan. Part of a heterotetrameric complex that catalyzes the two-step biosynthesis of anthranilate, an intermediate in the biosynthesis of L-tryptophan. In the first step, the glutamine-binding beta subunit (TrpG) of anthranilate synthase (AS) provides the glutamine amidotransferase activity which generates ammonia as a substrate that, along with chorismate, is used in the second step, catalyzed by the large alpha subunit of AS (TrpE) to produce anthranilate. In the absence of TrpG, TrpE can synthesize anthranilate directly from chorismate and high concentrations of ammonia. In Spirochaeta aurantia, this protein is Anthranilate synthase component 1 (trpE).